We begin with the raw amino-acid sequence, 883 residues long: Puromycin-sensitive aminopeptidase (883 aa).

Substrate is bound by residues Glu-125 and 265 to 269 (GAMEN). Residue His-301 coordinates Zn(2+). Glu-302 functions as the Proton acceptor in the catalytic mechanism. Zn(2+)-binding residues include His-305 and Glu-324.

Belongs to the peptidase M1 family. Zn(2+) is required as a cofactor.

The enzyme catalyses Release of an N-terminal amino acid, preferentially alanine, from a wide range of peptides, amides and arylamides.. Its activity is regulated as follows. Strongly inhibited by puromycin and DAMPAQ-22. Aminopeptidase with broad substrate specificity for several peptides. Involved in proteolytic events essential for cell growth and viability. Plays an essential role during prophase I of meiosis. Required for correct meiotic reconbination in both male and female gametophytes. The polypeptide is Puromycin-sensitive aminopeptidase (MPA1) (Arabidopsis thaliana (Mouse-ear cress)).